The following is a 195-amino-acid chain: Imidazoleglycerol-phosphate dehydratase (195 aa).

Belongs to the imidazoleglycerol-phosphate dehydratase family.

Its subcellular location is the cytoplasm. The catalysed reaction is D-erythro-1-(imidazol-4-yl)glycerol 3-phosphate = 3-(imidazol-4-yl)-2-oxopropyl phosphate + H2O. It participates in amino-acid biosynthesis; L-histidine biosynthesis; L-histidine from 5-phospho-alpha-D-ribose 1-diphosphate: step 6/9. This chain is Imidazoleglycerol-phosphate dehydratase, found in Paracoccus denitrificans (strain Pd 1222).